A 190-amino-acid polypeptide reads, in one-letter code: dTTP/UTP pyrophosphatase (190 aa).

Residue aspartate 68 is the Proton acceptor of the active site.

It belongs to the Maf family. YhdE subfamily. Requires a divalent metal cation as cofactor.

Its subcellular location is the cytoplasm. It catalyses the reaction dTTP + H2O = dTMP + diphosphate + H(+). The enzyme catalyses UTP + H2O = UMP + diphosphate + H(+). Its function is as follows. Nucleoside triphosphate pyrophosphatase that hydrolyzes dTTP and UTP. May have a dual role in cell division arrest and in preventing the incorporation of modified nucleotides into cellular nucleic acids. This Acholeplasma laidlawii (strain PG-8A) protein is dTTP/UTP pyrophosphatase.